Consider the following 179-residue polypeptide: MRQLLLTLSLISVSASDATVKCDDLDPNQYLCKNYAVDTITQQSVTCAADNSIQVMCETAEHIKCVGKDQFGIFNRTVPSACHYGAHVSYTTTVLLSIFLGFFGIDRIYLGYYALGLIKMFSLGGLFVFWLVDIILISLQLLGPADGTAYAMAYYGPKAQMIRFDSHTNFSFYTCDGCL.

The N-terminal stretch at 1-18 is a signal peptide; sequence MRQLLLTLSLISVSASDA. Topologically, residues 19–82 are extracellular; the sequence is TVKCDDLDPN…IFNRTVPSAC (64 aa). N75 is a glycosylation site (N-linked (GlcNAc...) asparagine). Residues 83 to 105 traverse the membrane as a helical segment; the sequence is HYGAHVSYTTTVLLSIFLGFFGI. The region spanning 88 to 135 is the TM2 domain; sequence VSYTTTVLLSIFLGFFGIDRIYLGYYALGLIKMFSLGGLFVFWLVDII. Residues 106–109 are Cytoplasmic-facing; it reads DRIY. Residues 110-132 form a helical membrane-spanning segment; that stretch reads LGYYALGLIKMFSLGGLFVFWLV. Residues 133 to 179 are Extracellular-facing; it reads DIILISLQLLGPADGTAYAMAYYGPKAQMIRFDSHTNFSFYTCDGCL. N-linked (GlcNAc...) asparagine glycosylation occurs at N169.

The protein belongs to the TM2 family.

Its subcellular location is the membrane. This chain is TM2 domain-containing protein Y66D12A.21, found in Caenorhabditis elegans.